Here is a 331-residue protein sequence, read N- to C-terminus: Glucokinase (331 aa).

Position 16 to 21 (Gly-16 to Thr-21) interacts with ATP.

It belongs to the bacterial glucokinase family.

The protein resides in the cytoplasm. The enzyme catalyses D-glucose + ATP = D-glucose 6-phosphate + ADP + H(+). In Pseudomonas aeruginosa (strain UCBPP-PA14), this protein is Glucokinase.